The following is a 517-amino-acid chain: Benzoate 4-monooxygenase bphA (517 aa).

The helical transmembrane segment at 4-24 (LLLSPYGAYLGLALLVLYYLL) threads the bilayer. 2 N-linked (GlcNAc...) asparagine glycosylation sites follow: asparagine 282 and asparagine 325. Cysteine 461 is a binding site for heme.

The protein belongs to the cytochrome P450 family. The cofactor is heme.

The protein localises to the membrane. It carries out the reaction benzoate + reduced [NADPH--hemoprotein reductase] + O2 = 4-hydroxybenzoate + oxidized [NADPH--hemoprotein reductase] + H2O + H(+). Functionally, cytochrome P450 monooxygenase; part of the benzoic acid degradation pathway also known as the protocatechuic acid pathway. Benzoic acid debradation begins with the conversion of benzoic acid into 4-hydroxybenzoic acid through hydroxylation by the benzoate-4-monooxygenase bphA, and its partner NADPH-cytochrome P450 reductase cprA which act as a mediator in electron donation from NADPH. 4-Hydroxybenzoic acid is then converted into 3,4-dihydroxybenzoic acid (also called protocatechuic acid) by the p-hydroxybenzoate-m-hydroxylase phhA. Protocatechuic acid is converted into 3-carboxy-cis,cis-muconic acid by the intradiol ring-cleavage dioxygenase prcA, which is further metabolized through the 3-oxoadipate pathway to finally enter the tricarboxylic acid cycle (TCA). In terms of biological role, responsible for cytochrome P450 dependent benzoate hydroxylation in microsomes; requires cprA as the mediator in electron donation from NADPH. The protein is Benzoate 4-monooxygenase bphA of Aspergillus niger.